A 179-amino-acid polypeptide reads, in one-letter code: Large ribosomal subunit protein uL5 (179 aa).

It belongs to the universal ribosomal protein uL5 family. Part of the 50S ribosomal subunit; part of the 5S rRNA/L5/L18/L25 subcomplex. Contacts the 5S rRNA and the P site tRNA. Forms a bridge to the 30S subunit in the 70S ribosome.

This is one of the proteins that bind and probably mediate the attachment of the 5S RNA into the large ribosomal subunit, where it forms part of the central protuberance. In the 70S ribosome it contacts protein S13 of the 30S subunit (bridge B1b), connecting the 2 subunits; this bridge is implicated in subunit movement. Contacts the P site tRNA; the 5S rRNA and some of its associated proteins might help stabilize positioning of ribosome-bound tRNAs. This chain is Large ribosomal subunit protein uL5, found in Nitratidesulfovibrio vulgaris (strain ATCC 29579 / DSM 644 / CCUG 34227 / NCIMB 8303 / VKM B-1760 / Hildenborough) (Desulfovibrio vulgaris).